A 378-amino-acid polypeptide reads, in one-letter code: MLPLSIKDDEYKPPRLNLFRKMSGWFRSILADKTSRNLFFFLCLNLSFAFVELLYGVWSNSLGLISDSFHMFFDCTALLAGLAASVISKWRSNDAFSYGYVRAEVLAGFVNGLFLIFTAFFIFSEGVERALEPPDVHHERLLPVSILGFIVNLIGIFVFQHGGHGHSHGSGHEHSHSLFNGGLSHGHSHRGHGHSHEHKHGHTHDHGHSHGLSHGQDYCHDDHCLEGMTGSSKQILQGVFLHIVADTLGSIGVIISAILMQNYGLMIADPICSMLIALLIGVSIVPLLKESIGILMQRTPPSLENALPQCYQRVQQLQGVYSLHDPHFWTLCTDVYIGTLKLLVAPDADGRWILSQTHNIFTQAGVRQLYIQIDVAAM.

Residues 1 to 37 (MLPLSIKDDEYKPPRLNLFRKMSGWFRSILADKTSRN) lie on the Cytoplasmic side of the membrane. The helical transmembrane segment at 38–58 (LFFFLCLNLSFAFVELLYGVW) threads the bilayer. The Lumenal portion of the chain corresponds to 59–67 (SNSLGLISD). Residues 68–88 (SFHMFFDCTALLAGLAASVIS) form a helical membrane-spanning segment. Residues 89–102 (KWRSNDAFSYGYVR) lie on the Cytoplasmic side of the membrane. The chain crosses the membrane as a helical span at residues 103–123 (AEVLAGFVNGLFLIFTAFFIF). Over 124-140 (SEGVERALEPPDVHHER) the chain is Lumenal. Residues 141 to 161 (LLPVSILGFIVNLIGIFVFQH) traverse the membrane as a helical segment. Residues 161 to 223 (HGGHGHSHGS…HGQDYCHDDH (63 aa)) are his-rich loop. Residues 162–238 (GGHGHSHGSG…TGSSKQILQG (77 aa)) lie on the Cytoplasmic side of the membrane. The segment at 185–214 (HGHSHRGHGHSHEHKHGHTHDHGHSHGLSH) is disordered. Basic residues predominate over residues 186-211 (GHSHRGHGHSHEHKHGHTHDHGHSHG). A helical transmembrane segment spans residues 239-259 (VFLHIVADTLGSIGVIISAIL). At 260 to 264 (MQNYG) the chain is on the lumenal side. Residues 265-285 (LMIADPICSMLIALLIGVSIV) traverse the membrane as a helical segment. Residues 286 to 378 (PLLKESIGIL…LYIQIDVAAM (93 aa)) are Cytoplasmic-facing.

This sequence belongs to the cation diffusion facilitator (CDF) transporter (TC 2.A.4) family. SLC30A subfamily. In terms of assembly, homooligomer.

The protein localises to the golgi apparatus membrane. Its subcellular location is the cytoplasmic vesicle. It localises to the golgi apparatus. It is found in the trans-Golgi network. The protein resides in the sarcoplasmic reticulum. The protein localises to the mitochondrion. The catalysed reaction is Zn(2+)(in) = Zn(2+)(out). Zinc ion transporter mediating zinc entry from the cytosol into the lumen of organelles along the secretory pathway. By contributing to zinc ion homeostasis within the early secretory pathway, regulates the activation and folding of enzymes like alkaline phosphatases. This chain is Zinc transporter 7 (SLC30A7), found in Gallus gallus (Chicken).